A 318-amino-acid polypeptide reads, in one-letter code: tRNA uridine(34) hydroxylase (318 aa).

The Rhodanese domain occupies glutamate 123–glutamine 217. Residue cysteine 177 is the Cysteine persulfide intermediate of the active site.

Belongs to the TrhO family.

The enzyme catalyses uridine(34) in tRNA + AH2 + O2 = 5-hydroxyuridine(34) in tRNA + A + H2O. Its function is as follows. Catalyzes oxygen-dependent 5-hydroxyuridine (ho5U) modification at position 34 in tRNAs. This is tRNA uridine(34) hydroxylase from Staphylococcus aureus (strain MRSA252).